Here is a 37-residue protein sequence, read N- to C-terminus: Large ribosomal subunit protein bL36c (37 aa).

Belongs to the bacterial ribosomal protein bL36 family.

The protein localises to the plastid. It is found in the chloroplast. In Acorus calamus (Sweet flag), this protein is Large ribosomal subunit protein bL36c.